A 170-amino-acid chain; its full sequence is Large ribosomal subunit protein uL10 (170 aa).

This sequence belongs to the universal ribosomal protein uL10 family. In terms of assembly, part of the ribosomal stalk of the 50S ribosomal subunit. The N-terminus interacts with L11 and the large rRNA to form the base of the stalk. The C-terminus forms an elongated spine to which L12 dimers bind in a sequential fashion forming a multimeric L10(L12)X complex.

Forms part of the ribosomal stalk, playing a central role in the interaction of the ribosome with GTP-bound translation factors. This is Large ribosomal subunit protein uL10 from Lactobacillus acidophilus (strain ATCC 700396 / NCK56 / N2 / NCFM).